Here is a 162-residue protein sequence, read N- to C-terminus: Protein-export protein SecB (162 aa).

Belongs to the SecB family. As to quaternary structure, homotetramer, a dimer of dimers. One homotetramer interacts with 1 SecA dimer.

Its subcellular location is the cytoplasm. Its function is as follows. One of the proteins required for the normal export of preproteins out of the cell cytoplasm. It is a molecular chaperone that binds to a subset of precursor proteins, maintaining them in a translocation-competent state. It also specifically binds to its receptor SecA. This is Protein-export protein SecB from Hamiltonella defensa subsp. Acyrthosiphon pisum (strain 5AT).